The chain runs to 370 residues: Divinyl chlorophyll a/b light-harvesting protein PcbD (370 aa).

The next 6 membrane-spanning stretches (helical) occupy residues 27–47 (FIAS…GSTL), 88–108 (VAAV…GALL), 140–160 (FILG…VEWA), 201–221 (VMGG…IHMV), 248–268 (AVLS…AFWA), and 315–335 (LVNV…WHAL).

The protein belongs to the PsbB/PsbC family. IsiA/Pcb subfamily. As to quaternary structure, the antenna complex consists of divinyl chlorophylls (a and b) and divinyl chlorophyll a/b binding proteins and binds more divinyl chlorophyll b than does the antenna complex from high-light-adapted Prochlorococcus. It depends on divinyl chlorophyll a as a cofactor. Divinyl chlorophyll b serves as cofactor.

It localises to the cellular thylakoid membrane. The antenna complex functions as a light receptor, it captures and delivers excitation energy to photosystems II and I. The Prochlorales pcb genes are not related to higher plant LHCs. The chain is Divinyl chlorophyll a/b light-harvesting protein PcbD (pcbD) from Prochlorococcus marinus (strain NATL2A).